Consider the following 349-residue polypeptide: AA9 family lytic polysaccharide monooxygenase C (349 aa).

A signal peptide spans 1-19 (MKSTFGLLALAAAAKLVSA). Positions 20 and 102 each coordinate Cu(2+). Residues Cys62 and Cys183 are joined by a disulfide bond. An O2-binding site is contributed by His169. A Cu(2+)-binding site is contributed by Tyr180. The disordered stretch occupies residues 233-304 (DGSSSGSSGS…SGSNSGSDSC (72 aa)). 2 stretches are compositionally biased toward low complexity: residues 234-262 (GSSSGSSGSSGSSPATTTAPAVSVTAAPT) and 269-304 (TSATPTTFVTATKPATTAAPAAPSASSGSNSGSDSC). In terms of domain architecture, CBM1 spans 311–347 (GSVKIYGQCGGQNYSGPTSCEAGLICKEWNPYYHQCV). Cystine bridges form between Cys319/Cys336 and Cys330/Cys346. Residue Asn323 is glycosylated (N-linked (GlcNAc...) asparagine).

Belongs to the polysaccharide monooxygenase AA9 family. It depends on Cu(2+) as a cofactor.

It localises to the secreted. The enzyme catalyses [(1-&gt;4)-beta-D-glucosyl]n+m + reduced acceptor + O2 = 4-dehydro-beta-D-glucosyl-[(1-&gt;4)-beta-D-glucosyl]n-1 + [(1-&gt;4)-beta-D-glucosyl]m + acceptor + H2O.. Functionally, lytic polysaccharide monooxygenase (LPMO) that depolymerizes crystalline and amorphous polysaccharides via the oxidation of scissile alpha- or beta-(1-4)-glycosidic bonds, yielding C4 oxidation products. Catalysis by LPMOs requires the reduction of the active-site copper from Cu(II) to Cu(I) by a reducing agent and H(2)O(2) or O(2) as a cosubstrate. Active on cellulose and cello-oligosaccharides, as well as plant cell wall-derived hemicellulosic polysaccharides. Also active on cello-oligosaccharides such as cellohexaose, cellopentaose or cellotetraose. In Aspergillus fumigatus (strain ATCC MYA-4609 / CBS 101355 / FGSC A1100 / Af293) (Neosartorya fumigata), this protein is AA9 family lytic polysaccharide monooxygenase C.